A 227-amino-acid chain; its full sequence is 2-heptyl-1-hydroxyquinolin-4(1H)-one methyltransferase (227 aa).

Belongs to the methyltransferase superfamily. In terms of assembly, monomer.

Its subcellular location is the cytoplasm. It catalyses the reaction 2-heptyl-1-hydroxy-4(1H)-quinolinone + S-adenosyl-L-methionine = 2-heptyl-1-methoxy-4(1H)-quinolinone + S-adenosyl-L-homocysteine + H(+). The enzyme catalyses 3-bromo-2-heptyl-1-hydroxy-4(1H)-quinolinone + S-adenosyl-L-methionine = 3-bromo-2-heptyl-1-methoxy-4(1H)-quinolinone + S-adenosyl-L-homocysteine + H(+). Involved in cellular response to chemical stress and may contribute to resistance toward antimicrobial natural compounds as well as drugs. Catalyzes the methylation and detoxification of the P.aeruginosa toxin 2-heptyl-1-hydroxy-4(1H)-quinolinone (HQNO) to 2-heptyl-1-methoxy-4(1H)-quinolinone (HMOQ). Can also methylate 3-bromo-2-heptyl-1-hydroxy-4(1H)-quinolinone, and shows much lower activity with 1-hydroxyquinolin-4(1H)-one, quercetin, 4-hydroxyquinolin-2(1H)-one (DHQ) and 4-hydroxyisoquinolin-1(2H)-one. The sequence is that of 2-heptyl-1-hydroxyquinolin-4(1H)-one methyltransferase from Mycobacteroides abscessus (strain ATCC 19977 / DSM 44196 / CCUG 20993 / CIP 104536 / JCM 13569 / NCTC 13031 / TMC 1543 / L948) (Mycobacterium abscessus).